A 174-amino-acid polypeptide reads, in one-letter code: Shikimate kinase 2 (174 aa).

12 to 17 lines the ATP pocket; sequence GCGKTT. Residues T16 and D32 each coordinate Mg(2+). Substrate-binding residues include D34, R58, and G79. Residues 112-126 form an LID domain region; sequence QAAPEEDLRPTLTGK. R120 is an ATP binding site. R139 is a substrate binding site.

The protein belongs to the shikimate kinase family. AroL subfamily. As to quaternary structure, monomer. The cofactor is Mg(2+).

It is found in the cytoplasm. The enzyme catalyses shikimate + ATP = 3-phosphoshikimate + ADP + H(+). The protein operates within metabolic intermediate biosynthesis; chorismate biosynthesis; chorismate from D-erythrose 4-phosphate and phosphoenolpyruvate: step 5/7. Its function is as follows. Catalyzes the specific phosphorylation of the 3-hydroxyl group of shikimic acid using ATP as a cosubstrate. This chain is Shikimate kinase 2, found in Escherichia coli O81 (strain ED1a).